A 227-amino-acid chain; its full sequence is Cytochrome c oxidase subunit 2 (227 aa).

The Mitochondrial intermembrane segment spans residues M1–H26. Residues A27–N48 form a helical membrane-spanning segment. Topologically, residues K49 to E62 are mitochondrial matrix. Residues T63–R82 form a helical membrane-spanning segment. Topologically, residues L83–A227 are mitochondrial intermembrane. Cu cation is bound by residues H161, C196, E198, C200, H204, and M207. E198 lines the Mg(2+) pocket.

Belongs to the cytochrome c oxidase subunit 2 family. Component of the cytochrome c oxidase (complex IV, CIV), a multisubunit enzyme composed of a catalytic core of 3 subunits and several supernumerary subunits. The complex exists as a monomer or a dimer and forms supercomplexes (SCs) in the inner mitochondrial membrane with ubiquinol-cytochrome c oxidoreductase (cytochrome b-c1 complex, complex III, CIII). It depends on Cu cation as a cofactor.

The protein localises to the mitochondrion inner membrane. It carries out the reaction 4 Fe(II)-[cytochrome c] + O2 + 8 H(+)(in) = 4 Fe(III)-[cytochrome c] + 2 H2O + 4 H(+)(out). Component of the cytochrome c oxidase, the last enzyme in the mitochondrial electron transport chain which drives oxidative phosphorylation. The respiratory chain contains 3 multisubunit complexes succinate dehydrogenase (complex II, CII), ubiquinol-cytochrome c oxidoreductase (cytochrome b-c1 complex, complex III, CIII) and cytochrome c oxidase (complex IV, CIV), that cooperate to transfer electrons derived from NADH and succinate to molecular oxygen, creating an electrochemical gradient over the inner membrane that drives transmembrane transport and the ATP synthase. Cytochrome c oxidase is the component of the respiratory chain that catalyzes the reduction of oxygen to water. Electrons originating from reduced cytochrome c in the intermembrane space (IMS) are transferred via the dinuclear copper A center (CU(A)) of subunit 2 and heme A of subunit 1 to the active site in subunit 1, a binuclear center (BNC) formed by heme A3 and copper B (CU(B)). The BNC reduces molecular oxygen to 2 water molecules using 4 electrons from cytochrome c in the IMS and 4 protons from the mitochondrial matrix. In Sitophilus granarius (Granary weevil), this protein is Cytochrome c oxidase subunit 2 (COII).